We begin with the raw amino-acid sequence, 400 residues long: Laminin subunit B (400 aa).

3 Laminin EGF-like domains span residues 1–5 (EGCKP), 6–53 (CECD…GCKS), and 54–100 (CTCN…QCIP). 8 cysteine pairs are disulfide-bonded: cysteine 6–cysteine 18, cysteine 8–cysteine 25, cysteine 27–cysteine 36, cysteine 39–cysteine 51, cysteine 54–cysteine 66, cysteine 56–cysteine 73, cysteine 75–cysteine 84, and cysteine 87–cysteine 98. Residues 101-400 (CGECFDNWDK…AEAKNNAHEA (300 aa)) are domain II and I. The stretch at 140 to 235 (KEFEELEQVL…RENALEIQEQ (96 aa)) forms a coiled coil. N-linked (GlcNAc...) asparagine glycans are attached at residues asparagine 160, asparagine 175, asparagine 216, asparagine 266, asparagine 283, asparagine 310, and asparagine 356. Residues 353 to 400 (EAKNTSRKAEELIKSKYRSTSSTLSELENSNKQCKQATAEAKNNAHEA) are a coiled coil. Positions 369–400 (YRSTSSTLSELENSNKQCKQATAEAKNNAHEA) are disordered. Residues 371–383 (STSSTLSELENSN) are compositionally biased toward low complexity.

As to quaternary structure, laminin is a complex glycoprotein, consisting of three different polypeptide chains (alpha, beta, gamma), which are bound to each other by disulfide bonds into a cross-shaped molecule comprising one long and three short arms with globules at each end. In terms of tissue distribution, individual glial and muscle cells.

It localises to the secreted. The protein resides in the extracellular space. Its subcellular location is the extracellular matrix. Its function is as follows. Binding to cells via a high affinity receptor, laminin is thought to mediate the attachment, migration and organization of cells into tissues during embryonic development by interacting with other extracellular matrix components. The sequence is that of Laminin subunit B from Hirudo medicinalis (Medicinal leech).